The chain runs to 223 residues: Urease accessory protein UreF (223 aa).

It belongs to the UreF family. In terms of assembly, ureD, UreF and UreG form a complex that acts as a GTP-hydrolysis-dependent molecular chaperone, activating the urease apoprotein by helping to assemble the nickel containing metallocenter of UreC. The UreE protein probably delivers the nickel.

Its subcellular location is the cytoplasm. Its function is as follows. Required for maturation of urease via the functional incorporation of the urease nickel metallocenter. In Mesorhizobium japonicum (strain LMG 29417 / CECT 9101 / MAFF 303099) (Mesorhizobium loti (strain MAFF 303099)), this protein is Urease accessory protein UreF.